The sequence spans 3623 residues: Cubilin (3623 aa).

An N-terminal signal peptide occupies residues 1-23 (MMNMSLPFLWSLLTLLIFAEVNG). Positions 24–35 (EAGELELQRQKR) are cleaved as a propeptide — removed in mature form. Residues 42-49 (PRMATERG) form an interaction with AMN region. Asn105 carries an N-linked (GlcNAc...) asparagine glycan. Positions 132 to 168 (DKKVCSSNPCQNGGTCLNLHDSFFCICPPQWKGPLCS) constitute an EGF-like 1 domain. 9 disulfide bridges follow: Cys136-Cys147, Cys141-Cys156, Cys158-Cys167, Cys174-Cys190, Cys184-Cys199, Cys201-Cys210, Cys267-Cys280, Cys274-Cys289, and Cys292-Cys303. The region spanning 170-211 (DVNECEIYSGTPLSCQNGGTCVNTMGSYSCHCPPETYGPQCA) is the EGF-like 2; calcium-binding domain. One can recognise an EGF-like 3; calcium-binding domain in the interval 263–304 (DRDECSFQPGPCSTLVQCFNTQGSFYCGACPTGWQGNGYICE). In terms of domain architecture, EGF-like 4; calcium-binding spans 305-348 (DINECEINNGGCSVAPPVECVNTPGSSHCQACPPGYQGDGRVCT). EGF-like domains lie at 349-385 (LTDI…YTGN) and 395-430 (LSNI…VNCT). 13 cysteine pairs are disulfide-bonded: Cys353–Cys366, Cys360–Cys376, Cys399–Cys409, Cys404–Cys418, Cys420–Cys429, Cys436–Cys447, Cys441–Cys456, Cys458–Cys467, Cys474–Cys500, Cys527–Cys549, Cys590–Cys616, Cys643–Cys665, and Cys708–Cys734. An N-linked (GlcNAc...) asparagine glycan is attached at Asn428. In terms of domain architecture, EGF-like 7; calcium-binding spans 432–468 (NINECLSNPCLNGGTCVDGVDSFSCECTRLWTGALCQ). CUB domains are found at residues 474 to 586 (CGES…WETQ), 590 to 702 (CGGI…YLTS), 708 to 816 (CGGN…YQVA), 816 to 928 (ACGD…FSAE), 932 to 1042 (CGEI…YEAI), 1048 to 1161 (CLQD…WDGS), 1165 to 1277 (CGGN…YRQT), 1278 to 1389 (CENV…WFVY), 1391 to 1506 (CGGE…WQAV), 1510 to 1619 (CGGI…FRQA), 1620 to 1734 (CGGH…VTAS), 1738 to 1850 (CGGT…FMKI), 1852 to 1963 (GNDN…WFAV), 1978 to 2091 (CGGF…FHKS), 2092 to 2213 (CGGY…YEAK), 2217 to 2334 (CGGN…YSIA), 2336 to 2448 (CGGR…FESS), 2452 to 2565 (CGGD…YTSS), 2570 to 2687 (CGGS…YSFT), 2689 to 2801 (CGGI…WNTQ), 2805 to 2919 (CGGI…FVSR), 2920 to 3035 (CGSN…YRII), 3037 to 3150 (CGGV…FRQT), 3157 to 3274 (CGGY…YTIM), 3278 to 3393 (CGGT…YQIA), 3395 to 3507 (CNRD…WTSS), and 3511 to 3623 (CGGT…TWDS). N-linked (GlcNAc...) asparagine glycosylation is present at Asn482. Asn711, Asn749, Asn781, and Asn857 each carry an N-linked (GlcNAc...) asparagine glycan. Intrachain disulfides connect Cys869–Cys891 and Cys932–Cys958. N-linked (GlcNAc...) asparagine glycosylation is present at Asn957. Ca(2+) is bound at residue Glu980. N-linked (GlcNAc...) asparagine glycosylation occurs at Asn984. The cysteines at positions 985 and 1005 are disulfide-linked. Positions 988, 1027, 1029, and 1030 each coordinate Ca(2+). Cys1048 and Cys1074 form a disulfide bridge. Residue Asn1092 is glycosylated (N-linked (GlcNAc...) asparagine). Positions 1096, 1105, 1146, 1148, and 1149 each coordinate Ca(2+). An intrachain disulfide couples Cys1165 to Cys1191. Asn1168 is a glycosylation site (N-linked (GlcNAc...) asparagine). Glu1213 lines the Ca(2+) pocket. Asn1217 is a glycosylation site (N-linked (GlcNAc...) asparagine). Residues Cys1218 and Cys1240 are joined by a disulfide bond. 4 residues coordinate Ca(2+): Asp1221, Asp1262, Gly1264, and Gln1265. A disulfide bridge links Cys1278 with Cys1306. Residues Asn1285, Asn1307, and Asn1319 are each glycosylated (N-linked (GlcNAc...) asparagine). Glu1328 contacts Ca(2+). An N-linked (GlcNAc...) asparagine glycan is attached at Asn1332. Cys1333 and Cys1351 are oxidised to a cystine. Ca(2+) is bound by residues Asp1336, Asp1373, and Val1375. 2 cysteine pairs are disulfide-bonded: Cys1391-Cys1417 and Cys1444-Cys1466. Asn1500 is a glycosylation site (N-linked (GlcNAc...) asparagine). An intrachain disulfide couples Cys1510 to Cys1536. An N-linked (GlcNAc...) asparagine glycan is attached at Asn1551. 5 disulfides stabilise this stretch: Cys1563–Cys1581, Cys1620–Cys1647, Cys1675–Cys1697, Cys1738–Cys1764, and Cys1791–Cys1812. Asn1646 carries an N-linked (GlcNAc...) asparagine glycan. N-linked (GlcNAc...) asparagine glycosylation is found at Asn1802, Asn1819, and Asn1885. 3 disulfides stabilise this stretch: Cys1905–Cys1927, Cys1978–Cys2006, and Cys2032–Cys2054. 2 N-linked (GlcNAc...) asparagine glycosylation sites follow: Asn2085 and Asn2117. 2 cysteine pairs are disulfide-bonded: Cys2092–Cys2118 and Cys2217–Cys2247. Residue Asn2274 is glycosylated (N-linked (GlcNAc...) asparagine). Disulfide bonds link Cys2275/Cys2297 and Cys2336/Cys2363. 2 N-linked (GlcNAc...) asparagine glycosylation sites follow: Asn2386 and Asn2400. 3 cysteine pairs are disulfide-bonded: Cys2390/Cys2411, Cys2452/Cys2478, and Cys2505/Cys2527. Asn2531, Asn2581, Asn2592, and Asn2610 each carry an N-linked (GlcNAc...) asparagine glycan. Cysteines 2570 and 2599 form a disulfide. 7 cysteine pairs are disulfide-bonded: Cys2628/Cys2649, Cys2689/Cys2715, Cys2742/Cys2764, Cys2805/Cys2831, Cys2860/Cys2883, Cys2920/Cys2946, and Cys2977/Cys2999. A glycan (N-linked (GlcNAc...) asparagine) is linked at Asn2813. Asn2923 and Asn2945 each carry an N-linked (GlcNAc...) asparagine glycan. Thr3008 is subject to Phosphothreonine. 2 cysteine pairs are disulfide-bonded: Cys3037–Cys3064 and Cys3091–Cys3113. N-linked (GlcNAc...) asparagine glycans are attached at residues Asn3042, Asn3103, Asn3125, and Asn3165. 2 disulfide bridges follow: Cys3157–Cys3185 and Cys3215–Cys3237. Residues Asn3268, Asn3283, Asn3290, and Asn3295 are each glycosylated (N-linked (GlcNAc...) asparagine). 2 disulfides stabilise this stretch: Cys3278-Cys3306 and Cys3332-Cys3354. A glycan (N-linked (GlcNAc...) asparagine) is linked at Asn3357. A disulfide bridge links Cys3395 with Cys3421. 4 N-linked (GlcNAc...) asparagine glycosylation sites follow: Asn3430, Asn3457, Asn3533, and Asn3576. 3 disulfide bridges follow: Cys3448-Cys3470, Cys3511-Cys3537, and Cys3564-Cys3586.

As to quaternary structure, interacts with AMN. Component of the cubam complex composed of one CUBN trimer and one AMN chain. The cubam complex can dimerize. Interacts with LRP2 in a dual-receptor complex in a calcium-dependent manner. Found in a complex with PID1/PCLI1, LRP1 and CUBNI. Interacts with LRP1 and PID1/PCLI1. Post-translationally, the precursor is cleaved by a trans-Golgi proteinase furin, removing a propeptide. In terms of processing, N-glycosylated. Detected in kidney cortex (at protein level). Expressed in kidney proximal tubule cells, placenta, visceral yolk-sac cells and in absorptive intestinal cells. Expressed in the epithelium of intestine and kidney.

Its subcellular location is the apical cell membrane. The protein localises to the cell membrane. It localises to the membrane. It is found in the coated pit. The protein resides in the endosome. Its subcellular location is the lysosome membrane. Its function is as follows. Endocytic receptor which plays a role in lipoprotein, vitamin and iron metabolism by facilitating their uptake. Acts together with LRP2 to mediate endocytosis of high-density lipoproteins, GC, hemoglobin, ALB, TF and SCGB1A1. Acts together with AMN to mediate endocytosis of the CBLIF-cobalamin complex. Binds to ALB, MB, Kappa and lambda-light chains, TF, hemoglobin, GC, SCGB1A1, APOA1, high density lipoprotein, and the CBLIF-cobalamin complex. Ligand binding requires calcium. Serves as important transporter in several absorptive epithelia, including intestine, renal proximal tubules and embryonic yolk sac. May play an important role in the development of the peri-implantation embryo through internalization of APOA1 and cholesterol. Binds to LGALS3 at the maternal-fetal interface. The protein is Cubilin (CUBN) of Homo sapiens (Human).